A 158-amino-acid polypeptide reads, in one-letter code: uncharacterized protein (158 aa).

This is an uncharacterized protein from Bacillus subtilis (Bacteriophage phi-105).